The primary structure comprises 156 residues: Small ribosomal subunit protein uS7 (156 aa).

It belongs to the universal ribosomal protein uS7 family. In terms of assembly, part of the 30S ribosomal subunit. Contacts proteins S9 and S11.

One of the primary rRNA binding proteins, it binds directly to 16S rRNA where it nucleates assembly of the head domain of the 30S subunit. Is located at the subunit interface close to the decoding center, probably blocks exit of the E-site tRNA. The chain is Small ribosomal subunit protein uS7 from Treponema denticola (strain ATCC 35405 / DSM 14222 / CIP 103919 / JCM 8153 / KCTC 15104).